We begin with the raw amino-acid sequence, 154 residues long: Protein X (154 aa).

Positions 68–117 (PCALRFTSARRMETTVNAHQVLPKVLHKRTLGLSAMSTTDLEAYFKDCLF) are mitochondrial targeting sequence.

Belongs to the orthohepadnavirus protein X family. May form homodimer. May interact with host CEBPA, CFLAR, CREB1, DDB1, E4F1, HBXIP, HSPD1/HSP60, NFKBIA, POLR2E and SMAD4. Interacts with host SMC5-SMC6 complex and induces its degradation. Interacts with host TRPC4AP; leading to prevent ubiquitination of TRPC4AP. Interacts with host PLSCR1; this interaction promotes ubiquitination and degradation of HBx and impairs HBx-mediated cell proliferation. Post-translationally, a fraction may be phosphorylated in insect cells and HepG2 cells, a human hepatoblastoma cell line. Phosphorylated in vitro by host protein kinase C or mitogen-activated protein kinase. N-acetylated in insect cells.

Its subcellular location is the host cytoplasm. The protein resides in the host nucleus. It localises to the host mitochondrion. Functionally, multifunctional protein that plays a role in silencing host antiviral defenses and promoting viral transcription. Does not seem to be essential for HBV infection. May be directly involved in development of cirrhosis and liver cancer (hepatocellular carcinoma). Most of cytosolic activities involve modulation of cytosolic calcium. The effect on apoptosis is controversial depending on the cell types in which the studies have been conducted. May induce apoptosis by localizing in mitochondria and causing loss of mitochondrial membrane potential. May also modulate apoptosis by binding host CFLAR, a key regulator of the death-inducing signaling complex (DISC). Promotes viral transcription by using the host E3 ubiquitin ligase DDB1 to target the SMC5-SMC6 complex to proteasomal degradation. This host complex would otherwise bind to viral episomal DNA, and prevents its transcription. Moderately stimulates transcription of many different viral and cellular transcription elements. Promoters and enhancers stimulated by HBx contain DNA binding sites for NF-kappa-B, AP-1, AP-2, c-EBP, ATF/CREB, or the calcium-activated factor NF-AT. This chain is Protein X, found in Hepatitis B virus genotype C subtype adr (strain Japan/adr4/1983) (HBV-C).